A 138-amino-acid polypeptide reads, in one-letter code: MLSPKKVKYRKKQRGRLSGEAQKGNKISFGEYGLVSLETNFITARQIEAARIAMTRKIKRGGRVWIRIFPDIPYTKKPAETRMGKGKGGVDHWNAPVKLGTVMFEMSGVVEELAQEAMSLASSKLPVKTMFVVRRDLR.

Residues 1–15 (MLSPKKVKYRKKQRG) show a composition bias toward basic residues. The segment at 1–21 (MLSPKKVKYRKKQRGRLSGEA) is disordered.

Belongs to the universal ribosomal protein uL16 family. Part of the 50S ribosomal subunit.

Binds 23S rRNA and is also seen to make contacts with the A and possibly P site tRNAs. This chain is Large ribosomal subunit protein uL16, found in Borreliella burgdorferi (strain ATCC 35210 / DSM 4680 / CIP 102532 / B31) (Borrelia burgdorferi).